Here is an 80-residue protein sequence, read N- to C-terminus: Large ribosomal subunit protein eL14 (80 aa).

The protein belongs to the eukaryotic ribosomal protein eL14 family.

This Methanocaldococcus jannaschii (strain ATCC 43067 / DSM 2661 / JAL-1 / JCM 10045 / NBRC 100440) (Methanococcus jannaschii) protein is Large ribosomal subunit protein eL14.